Reading from the N-terminus, the 86-residue chain is ATP synthase subunit c (86 aa).

Helical transmembrane passes span 8–28 (VLGC…GPGI) and 64–84 (TTGL…PLLG).

The protein belongs to the ATPase C chain family. As to quaternary structure, F-type ATPases have 2 components, F(1) - the catalytic core - and F(0) - the membrane proton channel. F(1) has five subunits: alpha(3), beta(3), gamma(1), delta(1), epsilon(1). F(0) has three main subunits: a(1), b(2) and c(10-14). The alpha and beta chains form an alternating ring which encloses part of the gamma chain. F(1) is attached to F(0) by a central stalk formed by the gamma and epsilon chains, while a peripheral stalk is formed by the delta and b chains.

Its subcellular location is the cell membrane. Its function is as follows. F(1)F(0) ATP synthase produces ATP from ADP in the presence of a proton or sodium gradient. F-type ATPases consist of two structural domains, F(1) containing the extramembraneous catalytic core and F(0) containing the membrane proton channel, linked together by a central stalk and a peripheral stalk. During catalysis, ATP synthesis in the catalytic domain of F(1) is coupled via a rotary mechanism of the central stalk subunits to proton translocation. Key component of the F(0) channel; it plays a direct role in translocation across the membrane. A homomeric c-ring of between 10-14 subunits forms the central stalk rotor element with the F(1) delta and epsilon subunits. This is ATP synthase subunit c from Lachnoclostridium phytofermentans (strain ATCC 700394 / DSM 18823 / ISDg) (Clostridium phytofermentans).